Here is a 191-residue protein sequence, read N- to C-terminus: Putative inactive glutathione hydrolase 4 (191 aa).

Thr54 (nucleophile) is an active-site residue. Residues Thr72, Asn74, Glu93, Asp96, 126 to 127 (SS), and 147 to 148 (GG) contribute to the L-glutamate site.

The protein belongs to the gamma-glutamyltransferase family. Expressed at low levels in embryo, roots and leaves. In mature plants, expression is restricted to vascular tissues of roots, leaves, flowers and siliques.

The chain is Putative inactive glutathione hydrolase 4 (GGT4) from Arabidopsis thaliana (Mouse-ear cress).